A 198-amino-acid chain; its full sequence is NADH-quinone oxidoreductase subunit I (198 aa).

4Fe-4S ferredoxin-type domains follow at residues 42–72 and 88–117; these read LNRW…VEGA and RVYE…MTND. 8 residues coordinate [4Fe-4S] cluster: Cys52, Cys55, Cys58, Cys62, Cys97, Cys100, Cys103, and Cys107. The tract at residues 137–198 is disordered; sequence APLKEGMEQP…DTQHKDEEAA (62 aa). Residues 182 to 198 are compositionally biased toward basic and acidic residues; that stretch reads AHRDDDNDTQHKDEEAA.

This sequence belongs to the complex I 23 kDa subunit family. In terms of assembly, NDH-1 is composed of 14 different subunits. Subunits NuoA, H, J, K, L, M, N constitute the membrane sector of the complex. [4Fe-4S] cluster is required as a cofactor.

The protein localises to the cell membrane. The catalysed reaction is a quinone + NADH + 5 H(+)(in) = a quinol + NAD(+) + 4 H(+)(out). Its function is as follows. NDH-1 shuttles electrons from NADH, via FMN and iron-sulfur (Fe-S) centers, to quinones in the respiratory chain. The immediate electron acceptor for the enzyme in this species is believed to be ubiquinone. Couples the redox reaction to proton translocation (for every two electrons transferred, four hydrogen ions are translocated across the cytoplasmic membrane), and thus conserves the redox energy in a proton gradient. This is NADH-quinone oxidoreductase subunit I from Cutibacterium acnes (strain DSM 16379 / KPA171202) (Propionibacterium acnes).